Reading from the N-terminus, the 186-residue chain is dTTP/UTP pyrophosphatase (186 aa).

Catalysis depends on Asp67, which acts as the Proton acceptor.

The protein belongs to the Maf family. YhdE subfamily. A divalent metal cation is required as a cofactor.

It localises to the cytoplasm. It carries out the reaction dTTP + H2O = dTMP + diphosphate + H(+). The enzyme catalyses UTP + H2O = UMP + diphosphate + H(+). Functionally, nucleoside triphosphate pyrophosphatase that hydrolyzes dTTP and UTP. May have a dual role in cell division arrest and in preventing the incorporation of modified nucleotides into cellular nucleic acids. The sequence is that of dTTP/UTP pyrophosphatase from Carboxydothermus hydrogenoformans (strain ATCC BAA-161 / DSM 6008 / Z-2901).